The chain runs to 873 residues: MLNFFKNLFDDNAREVKKLQRVVEEINGLEEKIAKLTDEELQGKTAEFKQLLENGKTLNDILPEAFAVCREASKRVLGMRHYDVQLIGGMVLHQGRIAEMRTGEGKTLVATLPVYLNALSGKGVHVITVNDYLATRDSEWMGKLYRFLGLSVGLIVHGIKPEDRRLAYNADITYGTNNEFGFDYLRDNMSLHPEQLVQRELNYSIVDEVDSILIDEARTPLIISGVADKPTHLYYTMAKIVPKLVREVDYTVDEKAHNVLLTEEGVSKAEKLLGIENLYDEANMEINHHLNQSLKAHGLMHRDRDYVVRDGEVVIVDEFTGRLMFGRRYSDGLHQAIEAKEGVKIEKESQTLATITFQNYFRMYNKIAGMTGTALTEEEEFRKIYGLDVVVIPTNKPTIRKDLADLVYKTEMAKFRAVVEDVVQRHETGQPVLVGTISIAKSELLSSLLKRRGVPHQVLNAKHHDKEAEIIAQAGRFKAVTIATNMAGRGTDILLGGNPEVFARAEMRKKGITEENAPAEYQQIVEKYMALCNEERAKVMEKGGLHIIGTERHESRRIDNQLRGRAGRQGDPGSSQFYIALEDDLMRLFGSDNIAGLMDRLGMEEDVPIENALITKSIETAQKRVESRNFSIRKHVLDYDDVMNQQREVIYAQRRKVLTGHNLAENIKDTITAVVERSVDMYCPEGVHEEEWDLAGLLEYAEGLYMPNHNIEPAELEEMGRQGLKDELLERTMSLYQKREEELGAETLREIERIVLLRLVDEKWMDHLDAMDQLREGIGLRAYGSKDPVIEYKFEAYEMFNNMIANIQDDVVRYIFRVNVAAPQERTQRQVVENRYAEEEGKQPIRKENQIGRNDDCPCGSGKKYKKCCGKNA.

Residues Gln-85, 103 to 107 (GEGKT), and Asp-492 each bind ATP. Basic and acidic residues predominate over residues 835–856 (RYAEEEGKQPIRKENQIGRNDD). Residues 835 to 873 (RYAEEEGKQPIRKENQIGRNDDCPCGSGKKYKKCCGKNA) form a disordered region. Positions 857, 859, 868, and 869 each coordinate Zn(2+). Basic residues predominate over residues 863–873 (KKYKKCCGKNA).

The protein belongs to the SecA family. Monomer and homodimer. Part of the essential Sec protein translocation apparatus which comprises SecA, SecYEG and auxiliary proteins SecDF. Other proteins may also be involved. Requires Zn(2+) as cofactor.

Its subcellular location is the cell membrane. It localises to the cytoplasm. The catalysed reaction is ATP + H2O + cellular proteinSide 1 = ADP + phosphate + cellular proteinSide 2.. Its function is as follows. Part of the Sec protein translocase complex. Interacts with the SecYEG preprotein conducting channel. Has a central role in coupling the hydrolysis of ATP to the transfer of proteins into and across the cell membrane, serving as an ATP-driven molecular motor driving the stepwise translocation of polypeptide chains across the membrane. The chain is Protein translocase subunit SecA from Desulforamulus reducens (strain ATCC BAA-1160 / DSM 100696 / MI-1) (Desulfotomaculum reducens).